Consider the following 1016-residue polypeptide: KN motif and ankyrin repeat domain-containing protein 4 (1016 aa).

Disordered regions lie at residues 1–26, 70–91, 235–259, 401–485, 506–563, and 622–755; these read MEKI…YPYS, PRNF…QQNW, AEPE…AVQS, LSQE…LPRG, EEGS…SPQD, and AQAP…VSHL. 2 stretches are compositionally biased toward polar residues: residues 70–80 and 246–258; these read PRNFSLPNSGD and SHLS…SAVQ. A coiled-coil region spans residues 346-409; sequence SSLKNQVLAL…KLSQERASEA (64 aa). 2 stretches are compositionally biased toward basic and acidic residues: residues 401 to 414 and 445 to 454; these read LSQE…DRTD and PECRAPRAEK. The segment covering 460–469 has biased composition (polar residues); the sequence is VQNNHKQSYP. The span at 632 to 650 shows a compositional bias: pro residues; sequence TPAPPPSTPPPPPPPPPEI. Thr-639 bears the Phosphothreonine mark. Acidic residues predominate over residues 695–708; that stretch reads TSGEDSSPEDLSDS. 2 stretches are compositionally biased toward basic and acidic residues: residues 709 to 727 and 745 to 755; these read ETEK…DLHP and TSDRGEEVSHL. ANK repeat units lie at residues 838-868, 877-905, 910-939, 943-973, and 977-1007; these read SGNT…NVDH, VMIT…NVNI, GGQT…DVNL, DGSS…NSSL, and AGRT…PGRS.

It is found in the cytoplasm. Its function is as follows. May be involved in the control of cytoskeleton formation by regulating actin polymerization. The protein is KN motif and ankyrin repeat domain-containing protein 4 (Kank4) of Mus musculus (Mouse).